The chain runs to 142 residues: Transcriptional regulator MraZ (142 aa).

2 consecutive SpoVT-AbrB domains span residues 5–47 and 76–119; these read EFTH…PLNE and ATDC…SAER.

The protein belongs to the MraZ family. As to quaternary structure, forms oligomers.

Its subcellular location is the cytoplasm. It localises to the nucleoid. The chain is Transcriptional regulator MraZ from Limosilactobacillus reuteri (strain DSM 20016) (Lactobacillus reuteri).